The following is a 585-amino-acid chain: DNA ligase (585 aa).

ATP is bound at residue Glu-278. Residue Lys-280 is the N6-AMP-lysine intermediate of the active site. 6 residues coordinate ATP: Arg-285, Arg-301, Glu-330, Phe-370, Arg-444, and Lys-450.

The protein belongs to the ATP-dependent DNA ligase family. Requires Mg(2+) as cofactor.

It carries out the reaction ATP + (deoxyribonucleotide)n-3'-hydroxyl + 5'-phospho-(deoxyribonucleotide)m = (deoxyribonucleotide)n+m + AMP + diphosphate.. In terms of biological role, DNA ligase that seals nicks in double-stranded DNA during DNA replication, DNA recombination and DNA repair. The protein is DNA ligase of Haloferax volcanii (strain ATCC 29605 / DSM 3757 / JCM 8879 / NBRC 14742 / NCIMB 2012 / VKM B-1768 / DS2) (Halobacterium volcanii).